The following is an 856-amino-acid chain: Dual specificity protein kinase TTK (856 aa).

Methionine 1 is subject to N-acetylmethionine. Serine 7 is modified (phosphoserine). The residue at position 33 (threonine 33) is a Phosphothreonine. Serine 37, serine 80, serine 281, serine 317, and serine 321 each carry phosphoserine. Threonine 360 is modified (phosphothreonine). Phosphoserine is present on serine 363. Residues 369–392 are disordered; the sequence is EETKEYQEPEVPESNQKQWQSKRK. A phosphoserine mark is found at serine 393, serine 435, and serine 454. One can recognise a Protein kinase domain in the interval 524–790; it reads YSILKQIGSG…IPELLAHPYV (267 aa). ATP-binding positions include 530–538 and lysine 552; that span reads IGSGGSSKV. Aspartate 646 (proton acceptor) is an active-site residue. Phosphoserine is present on serine 820. Positions 835 to 846 are enriched in low complexity; the sequence is YSGGESHNSSSS. The interval 835-856 is disordered; that stretch reads YSGGESHNSSSSKTFGKKREKK.

The protein belongs to the protein kinase superfamily. Ser/Thr protein kinase family. Interacts with TPR; the interactions occurs in a microtubule-independent manner. Interacts with MAD1L1 and MAD2L1.

It carries out the reaction L-seryl-[protein] + ATP = O-phospho-L-seryl-[protein] + ADP + H(+). It catalyses the reaction L-threonyl-[protein] + ATP = O-phospho-L-threonyl-[protein] + ADP + H(+). The enzyme catalyses L-tyrosyl-[protein] + ATP = O-phospho-L-tyrosyl-[protein] + ADP + H(+). Its activity is regulated as follows. Inhibited by the ATP-competitive kinase inhibitor, SP600125. In terms of biological role, involved in mitotic spindle assembly checkpoint signaling, a process that delays anaphase until chromosomes are bioriented on the spindle, and in the repair of incorrect mitotic kinetochore-spindle microtubule attachments. Phosphorylates MAD1L1 to promote the mitotic spindle assembly checkpoint. Phosphorylates CDCA8/Borealin leading to enhanced AURKB activity at the kinetochore. Phosphorylates SKA3 at 'Ser-34' leading to dissociation of the SKA complex from microtubules and destabilization of microtubule-kinetochore attachments. Phosphorylates KNL1, KNTC1 and autophosphorylates. Phosphorylates MCRS1 which enhances recruitment of KIF2A to the minus end of spindle microtubules and promotes chromosome alignment. The polypeptide is Dual specificity protein kinase TTK (TTK) (Macaca fascicularis (Crab-eating macaque)).